The sequence spans 297 residues: 33 kDa chaperonin (297 aa).

Disulfide bonds link C232-C234 and C266-C269.

It belongs to the HSP33 family. Post-translationally, under oxidizing conditions two disulfide bonds are formed involving the reactive cysteines. Under reducing conditions zinc is bound to the reactive cysteines and the protein is inactive.

It localises to the cytoplasm. Its function is as follows. Redox regulated molecular chaperone. Protects both thermally unfolding and oxidatively damaged proteins from irreversible aggregation. Plays an important role in the bacterial defense system toward oxidative stress. This chain is 33 kDa chaperonin, found in Pseudomonas aeruginosa (strain UCBPP-PA14).